Reading from the N-terminus, the 38-residue chain is Photosystem II reaction center protein L (38 aa).

The chain crosses the membrane as a helical span at residues 17–37 (SLFWGLLLIFVLAVLFSSYFF).

It belongs to the PsbL family. PSII is composed of 1 copy each of membrane proteins PsbA, PsbB, PsbC, PsbD, PsbE, PsbF, PsbH, PsbI, PsbJ, PsbK, PsbL, PsbM, PsbT, PsbX, PsbY, PsbZ, Psb30/Ycf12, at least 3 peripheral proteins of the oxygen-evolving complex and a large number of cofactors. It forms dimeric complexes.

It localises to the plastid. The protein resides in the chloroplast thylakoid membrane. One of the components of the core complex of photosystem II (PSII). PSII is a light-driven water:plastoquinone oxidoreductase that uses light energy to abstract electrons from H(2)O, generating O(2) and a proton gradient subsequently used for ATP formation. It consists of a core antenna complex that captures photons, and an electron transfer chain that converts photonic excitation into a charge separation. This subunit is found at the monomer-monomer interface and is required for correct PSII assembly and/or dimerization. The polypeptide is Photosystem II reaction center protein L (Zygnema circumcarinatum (Green alga)).